A 105-amino-acid chain; its full sequence is N(4)-acetylcytidine amidohydrolase (105 aa).

Positions threonine 7–glutamate 93 constitute an ASCH domain. Lysine 21 functions as the Proton acceptor in the catalytic mechanism. The active-site Nucleophile is threonine 24. Glutamate 74 serves as the catalytic Proton donor.

It belongs to the N(4)-acetylcytidine amidohydrolase family.

It carries out the reaction N(4)-acetylcytidine + H2O = cytidine + acetate + H(+). The enzyme catalyses N(4)-acetyl-2'-deoxycytidine + H2O = 2'-deoxycytidine + acetate + H(+). It catalyses the reaction N(4)-acetylcytosine + H2O = cytosine + acetate + H(+). Functionally, catalyzes the hydrolysis of N(4)-acetylcytidine (ac4C). This Shewanella baltica (strain OS223) protein is N(4)-acetylcytidine amidohydrolase.